The chain runs to 471 residues: Plasmepsin VII (471 aa).

An N-terminal signal peptide occupies residues 1–24 (MKSVYHHFAIIFFLKLFLCNCILS). One can recognise a Peptidase A1 domain in the interval 96–438 (YYGKIAIGEN…DKDNLQIGFV (343 aa)). Catalysis depends on residues Asp-115 and Asp-325.

Belongs to the peptidase A1 family.

The protein resides in the cytoplasm. The protein is Plasmepsin VII of Plasmodium berghei (strain Anka).